The sequence spans 309 residues: UPF0282 protein Msed_0584 (309 aa).

The protein belongs to the UPF0282 family.

This chain is UPF0282 protein Msed_0584, found in Metallosphaera sedula (strain ATCC 51363 / DSM 5348 / JCM 9185 / NBRC 15509 / TH2).